The sequence spans 668 residues: MAKITLDEAKKEAASLRTKLDEWADAYYSKDAPEVEDNVYDQSYNRLLELEKAFPEIVTPDSITQRVGGEIDSDFTKVNHPIPMLSMGDVFSKDELKEFDQRMQKLVGHPVEYNVELKIDGLSLSLEYQDGKLVRASTRGNGYIGEDVTANARYIADIPQVLPEPLTIEVRGECYMGKEAFAKLNQEREDEGLSVFANPRNAAAGSLRQLDPKVTKKRQLSTFIYTWVNPPREITSQHQAIERMHELGFHTNETGRKLANLDEVFDFIDEYTAKRNSLTYGIDGIVLKVDDLSLEQQLGNTVKVPRWEIAYKFPPEEQETIVRDIVWTVGRTGVVTPTAVMDPVQLAGTTVARASLHNPDYLNEKGVRIGDTVKLHKAGDIIPEISEVVLSKRPADSVPYEIPTTCPSCGQKLVHLEDEVALRCINPSCPAQVEEGIIHFASRPAMNIAGLGPKIVKQLIAKDLVHNVADLYHLTEDDLAQLDHFKEKSINNLLTAIDNSKKNSVELLITGLGIDHVGAKAARLIAQKFKNLEKIMSLGVQDIASIDTIGMTTAESMTTYFAQPEAQKLIEELRESGLNMDYLGADEPEEAPDNPFKDKTVVLTGKLEHYTRSEFTKKLQALGAKVTGSVSHKTDYVIYGKDAGSKYNKAEQLGVPLLTEEEAIAQIE.

NAD(+) is bound by residues 37-41 (DNVYD), 86-87 (SM), and Glu116. The active-site N6-AMP-lysine intermediate is Lys118. Positions 139, 173, 288, and 312 each coordinate NAD(+). The Zn(2+) site is built by Cys406, Cys409, Cys424, and Cys429. The BRCT domain maps to 591–668 (APDNPFKDKT…TEEEAIAQIE (78 aa)).

It belongs to the NAD-dependent DNA ligase family. LigA subfamily. The cofactor is Mg(2+). Mn(2+) serves as cofactor.

The enzyme catalyses NAD(+) + (deoxyribonucleotide)n-3'-hydroxyl + 5'-phospho-(deoxyribonucleotide)m = (deoxyribonucleotide)n+m + AMP + beta-nicotinamide D-nucleotide.. DNA ligase that catalyzes the formation of phosphodiester linkages between 5'-phosphoryl and 3'-hydroxyl groups in double-stranded DNA using NAD as a coenzyme and as the energy source for the reaction. It is essential for DNA replication and repair of damaged DNA. The chain is DNA ligase from Lactobacillus helveticus (strain DPC 4571).